A 490-amino-acid polypeptide reads, in one-letter code: Calcium-dependent protein kinase 12 (490 aa).

Residues Y22 to I280 enclose the Protein kinase domain. ATP-binding positions include L28 to T36 and K51. D146 acts as the Proton acceptor in catalysis. S186 carries the post-translational modification Phosphoserine. The autoinhibitory domain stretch occupies residues A286 to I316. EF-hand domains lie at E323 to E358, L359 to L394, E395 to N430, and L434 to T464. Ca(2+)-binding residues include D336, D338, S340, T342, E347, D372, D374, S376, T378, E383, D408, D410, S412, Y414, E419, D442, D444, D446, Q448, and E453.

This sequence belongs to the protein kinase superfamily. Ser/Thr protein kinase family. CDPK subfamily. As to quaternary structure, interacts weakly with DI19. Ubiquitously expressed.

It catalyses the reaction L-seryl-[protein] + ATP = O-phospho-L-seryl-[protein] + ADP + H(+). It carries out the reaction L-threonyl-[protein] + ATP = O-phospho-L-threonyl-[protein] + ADP + H(+). With respect to regulation, activated by calcium. Autophosphorylation may play an important role in the regulation of the kinase activity. In terms of biological role, may play a role in signal transduction pathways that involve calcium as a second messenger. The sequence is that of Calcium-dependent protein kinase 12 (CPK12) from Arabidopsis thaliana (Mouse-ear cress).